The primary structure comprises 159 residues: Probable minor fimbrial protein (159 aa).

The propeptide at 1-6 is leader sequence; that stretch reads MKKMHG. Phe7 carries the post-translational modification N-methylphenylalanine. The helical transmembrane segment at 7 to 29 threads the bilayer; sequence FTLIELMIVVAIIGVLASIALMQ. 2 disulfides stabilise this stretch: Cys56/Cys71 and Cys140/Cys153.

This sequence belongs to the N-Me-Phe pilin family. The pili are polar flexible filaments of about 5.4 nanometers diameter and 2.5 micrometers average length; they consist of only a single polypeptide chain arranged in a helical configuration of five subunits per turn in the assembled pilus.

It is found in the fimbrium. It localises to the membrane. The polypeptide is Probable minor fimbrial protein (fimZ) (Dichelobacter nodosus (Bacteroides nodosus)).